Consider the following 146-residue polypeptide: Endoribonuclease YbeY (146 aa).

Histidine 108, histidine 112, and histidine 118 together coordinate Zn(2+).

It belongs to the endoribonuclease YbeY family. Requires Zn(2+) as cofactor.

Its subcellular location is the cytoplasm. In terms of biological role, single strand-specific metallo-endoribonuclease involved in late-stage 70S ribosome quality control and in maturation of the 3' terminus of the 16S rRNA. The chain is Endoribonuclease YbeY from Onion yellows phytoplasma (strain OY-M).